The sequence spans 510 residues: UDP-N-acetylmuramoyl-tripeptide--D-alanyl-D-alanine ligase (510 aa).

136–142 (GSSGKTS) provides a ligand contact to ATP.

It belongs to the MurCDEF family. MurF subfamily.

The protein resides in the cytoplasm. The catalysed reaction is D-alanyl-D-alanine + UDP-N-acetyl-alpha-D-muramoyl-L-alanyl-gamma-D-glutamyl-meso-2,6-diaminopimelate + ATP = UDP-N-acetyl-alpha-D-muramoyl-L-alanyl-gamma-D-glutamyl-meso-2,6-diaminopimeloyl-D-alanyl-D-alanine + ADP + phosphate + H(+). The protein operates within cell wall biogenesis; peptidoglycan biosynthesis. In terms of biological role, involved in cell wall formation. Catalyzes the final step in the synthesis of UDP-N-acetylmuramoyl-pentapeptide, the precursor of murein. This chain is UDP-N-acetylmuramoyl-tripeptide--D-alanyl-D-alanine ligase, found in Mycobacterium tuberculosis (strain CDC 1551 / Oshkosh).